Here is a 208-residue protein sequence, read N- to C-terminus: MDFYYLPGSAPCRSVLMTAKALGIELNKKLLNLQAGEHLKPEFLKINPQHTIPTLVDGDFALWESRAIMVYLVEKYGKNDSLFPKCPKKRAVINQRLYFDMGTLYKSFADYYYPQIFAKAPADPELYKKMEAAFDFLNTFLEGHQYVAGDSLTVADLALLASVSTFEVAGFDFSKYANVAKWYANAKTVAPGFDENWEGCLEFKKFFN.

The 80-residue stretch at 1–80 (MDFYYLPGSA…YLVEKYGKND (80 aa)) folds into the GST N-terminal domain. Residues Ser9, 50–52 (HTI), and 64–66 (ESR) contribute to the glutathione site. The 122-residue stretch at 86–207 (CPKKRAVINQ…EGCLEFKKFF (122 aa)) folds into the GST C-terminal domain.

It belongs to the GST superfamily. Theta family. In terms of assembly, homodimer.

It catalyses the reaction RX + glutathione = an S-substituted glutathione + a halide anion + H(+). Conjugation of reduced glutathione to a wide number of exogenous and endogenous hydrophobic electrophiles. The protein is Glutathione S-transferase 1-1 (GST1) of Lucilia cuprina (Green bottle fly).